Consider the following 302-residue polypeptide: HTH-type transcriptional regulator AlsR (302 aa).

An HTH lysR-type domain is found at 1-58 (MELRHLQYFIAVAEELHFGKAARRLNMTQPPLSQQIKQLEEEVGVTLLKRTKRFVELT). A DNA-binding region (H-T-H motif) is located at residues 18 to 37 (FGKAARRLNMTQPPLSQQIK).

Belongs to the LysR transcriptional regulatory family.

Functionally, regulates the expression of the alsSD operon for acetoin biosynthesis. This Bacillus subtilis (strain 168) protein is HTH-type transcriptional regulator AlsR (alsR).